The primary structure comprises 660 residues: UvrABC system protein B (660 aa).

The Helicase ATP-binding domain maps to 26-414 (KKVLAGQRHQ…PEMTEQIIRP (389 aa)). 39–46 (GATGTGKT) serves as a coordination point for ATP. The Beta-hairpin signature appears at 92–115 (YYDYYQPEAYVPSTDTFIEKDASI). Positions 430 to 596 (QIDNLIEEIR…TIRKEVRDVI (167 aa)) constitute a Helicase C-terminal domain. The 36-residue stretch at 624-659 (EKVIEQMENEMKQAAKDLDFEKAAELRDVILELKAE) folds into the UVR domain.

Belongs to the UvrB family. In terms of assembly, forms a heterotetramer with UvrA during the search for lesions. Interacts with UvrC in an incision complex.

The protein resides in the cytoplasm. The UvrABC repair system catalyzes the recognition and processing of DNA lesions. A damage recognition complex composed of 2 UvrA and 2 UvrB subunits scans DNA for abnormalities. Upon binding of the UvrA(2)B(2) complex to a putative damaged site, the DNA wraps around one UvrB monomer. DNA wrap is dependent on ATP binding by UvrB and probably causes local melting of the DNA helix, facilitating insertion of UvrB beta-hairpin between the DNA strands. Then UvrB probes one DNA strand for the presence of a lesion. If a lesion is found the UvrA subunits dissociate and the UvrB-DNA preincision complex is formed. This complex is subsequently bound by UvrC and the second UvrB is released. If no lesion is found, the DNA wraps around the other UvrB subunit that will check the other stand for damage. The protein is UvrABC system protein B of Oceanobacillus iheyensis (strain DSM 14371 / CIP 107618 / JCM 11309 / KCTC 3954 / HTE831).